The chain runs to 423 residues: UPF0229 protein PSEEN0423 (423 aa).

The disordered stretch occupies residues 85 to 107 (GEHIARPQGGGGGGGRGKAGNSG). The span at 92–107 (QGGGGGGGRGKAGNSG) shows a compositional bias: gly residues.

The protein belongs to the UPF0229 family.

This chain is UPF0229 protein PSEEN0423, found in Pseudomonas entomophila (strain L48).